Here is a 150-residue protein sequence, read N- to C-terminus: UPF0756 membrane protein YE1142 (150 aa).

The next 4 helical transmembrane spans lie at 1–21 (MAALDPTLLILLVLAGLGIIS), 51–71 (YGLTIGILILTIGVMTPIASG), 88–108 (ILAIVVGVAVSWLGGRGVSLM), and 114–134 (VVAGLLVGTVLGVALFRGVPV).

This sequence belongs to the UPF0756 family.

Its subcellular location is the cell membrane. The protein is UPF0756 membrane protein YE1142 of Yersinia enterocolitica serotype O:8 / biotype 1B (strain NCTC 13174 / 8081).